The chain runs to 422 residues: Serine/threonine-protein kinase H1 homolog (422 aa).

The disordered stretch occupies residues 35-80 (FIKYDGGGEKTGSPSPQGQSQAVAKVSQSPPPANDQPEPADSHRKK). Residues 46 to 62 (GSPSPQGQSQAVAKVSQ) are compositionally biased toward polar residues. In terms of domain architecture, Protein kinase spans 96–353 (YDIKALIGRG…AGQALKHPWI (258 aa)). ATP-binding positions include 102-110 (IGRGSFSRV) and Lys125. Asp216 serves as the catalytic Proton acceptor. Positions 376–422 (RASSRCHSTKSSQSTRSSRSTKSSKARRLREKELRELNRRYQQQCNG) are disordered. A compositionally biased stretch (low complexity) spans 384-396 (TKSSQSTRSSRST). Basic and acidic residues predominate over residues 405–414 (REKELRELNR).

The protein belongs to the protein kinase superfamily. CAMK Ser/Thr protein kinase family.

It carries out the reaction L-seryl-[protein] + ATP = O-phospho-L-seryl-[protein] + ADP + H(+). The enzyme catalyses L-threonyl-[protein] + ATP = O-phospho-L-threonyl-[protein] + ADP + H(+). In Danio rerio (Zebrafish), this protein is Serine/threonine-protein kinase H1 homolog (pskh1).